The following is a 1017-amino-acid chain: Putative calcium-transporting ATPase 13, plasma membrane-type (1017 aa).

M1 bears the N-acetylmethionine mark. The Cytoplasmic segment spans residues 1-147 (MRRNVSDHAE…NTYTRQPSKG (147 aa)). Positions 20-31 (LLELPKTLSKSN) are interaction with calmodulin. Residues 148–168 (LFHFVVEAFKDLTILILLGCA) traverse the membrane as a helical segment. The Lumenal portion of the chain corresponds to 169-186 (TLSLGFGIKEHGLKEGWY). Residues 187–207 (DGGSIFVAVFLVVAVSAVSNF) traverse the membrane as a helical segment. At 208-336 (RQNRQFDKLS…NEQTPLQSRL (129 aa)) the chain is on the cytoplasmic side. Residues 337–356 (DKLTSSIGKVGLLVAFLVLL) traverse the membrane as a helical segment. Residues 357–393 (VLLIRYFTGTTKDESGNREYNGKTTKSDEIVNAVVKM) are Lumenal-facing. Residues 394–411 (VAAAVTIIVVAIPEGLPL) traverse the membrane as a helical segment. At 412 to 802 (AVTLTLAYSM…KWGRCVYNNI (391 aa)) the chain is on the cytoplasmic side. D449 functions as the 4-aspartylphosphate intermediate in the catalytic mechanism. Mg(2+) is bound by residues D747 and D751. A helical transmembrane segment spans residues 803-821 (QKFIQFQLTVNVAALVINF). Residues 822 to 832 (VAAVSAGDVPL) lie on the Lumenal side of the membrane. The helical transmembrane segment at 833 to 853 (TAVQLLWVNLIMDTLGALALA) threads the bilayer. Topologically, residues 854–873 (TEKPTNDLMKKKPIGRVAPL) are cytoplasmic. A helical transmembrane segment spans residues 874–896 (ITNIMWRNLLAQAFYQISVLLVL). Residues 897–905 (QFRGRSIFN) lie on the Lumenal side of the membrane. Residues 906-926 (VTEKVKNTLIFNTFVLCQVFN) form a helical membrane-spanning segment. Over 927 to 944 (EFNARSLEKKNVFKGLHK) the chain is Cytoplasmic. The helical transmembrane segment at 945–966 (NRLFIGIIVVTVVLQVVMVEFL) threads the bilayer. Over 967–976 (KRFADTERLN) the chain is Lumenal. A helical transmembrane segment spans residues 977–998 (LGQWGVCIAIAAASWPIGWLVK). Residues 999–1002 (SVPV) are Cytoplasmic-facing.

It belongs to the cation transport ATPase (P-type) (TC 3.A.3) family. Type IIB subfamily.

The protein resides in the membrane. It carries out the reaction Ca(2+)(in) + ATP + H2O = Ca(2+)(out) + ADP + phosphate + H(+). Its activity is regulated as follows. Activated by calmodulin. Its function is as follows. This magnesium-dependent enzyme catalyzes the hydrolysis of ATP coupled with the translocation of calcium from the cytosol out of the cell or into organelles. In Arabidopsis thaliana (Mouse-ear cress), this protein is Putative calcium-transporting ATPase 13, plasma membrane-type (ACA13).